We begin with the raw amino-acid sequence, 173 residues long: Mesencephalic astrocyte-derived neurotrophic factor homolog (173 aa).

The signal sequence occupies residues 1–22 (MKTWHMVVVIGFLATLAQTSLA). 4 disulfides stabilise this stretch: cysteine 28–cysteine 114, cysteine 31–cysteine 103, cysteine 61–cysteine 72, and cysteine 148–cysteine 151.

Belongs to the ARMET family.

It is found in the secreted. Required during the maturation of the embryonic nervous system for maintenance of neuronal and cuticular connectivity. Essential for maintenance of dopaminergic neurons and dopamine levels. The sequence is that of Mesencephalic astrocyte-derived neurotrophic factor homolog from Drosophila sechellia (Fruit fly).